A 441-amino-acid chain; its full sequence is Homogentisate 1,2-dioxygenase (441 aa).

His297 serves as the catalytic Proton acceptor. Residues His340 and Glu346 each contribute to the Fe cation site. Homogentisate-binding residues include Tyr355 and His376. Residue His376 coordinates Fe cation.

It belongs to the homogentisate dioxygenase family. As to quaternary structure, hexamer; dimer of trimers. The cofactor is Fe cation.

It carries out the reaction homogentisate + O2 = 4-maleylacetoacetate + H(+). It functions in the pathway amino-acid degradation; L-phenylalanine degradation; acetoacetate and fumarate from L-phenylalanine: step 4/6. In terms of biological role, involved in the catabolism of homogentisate (2,5-dihydroxyphenylacetate or 2,5-OH-PhAc), a central intermediate in the degradation of phenylalanine and tyrosine. Catalyzes the oxidative ring cleavage of the aromatic ring of homogentisate to yield maleylacetoacetate. In Streptomyces coelicolor (strain ATCC BAA-471 / A3(2) / M145), this protein is Homogentisate 1,2-dioxygenase.